The following is a 359-amino-acid chain: Heme A synthase (359 aa).

A run of 6 helical transmembrane segments spans residues 23-43, 85-105, 109-129, 137-157, 172-192, and 212-232; these read AVAF…VLGG, YAAL…FFEW, LLGR…WLRG, LKLL…WWMV, LAIH…LAAS, and AGLI…VAGL. His-276 provides a ligand contact to heme. 3 consecutive transmembrane segments (helical) span residues 278 to 298, 308 to 328, and 329 to 349; these read MVAY…SGTL, IALL…LVLV, and VPLW…GMAV. His-337 serves as a coordination point for heme.

The protein belongs to the COX15/CtaA family. Type 2 subfamily. In terms of assembly, interacts with CtaB. It depends on heme b as a cofactor.

The protein localises to the cell membrane. The enzyme catalyses Fe(II)-heme o + 2 A + H2O = Fe(II)-heme a + 2 AH2. It participates in porphyrin-containing compound metabolism; heme A biosynthesis; heme A from heme O: step 1/1. Catalyzes the conversion of heme O to heme A by two successive hydroxylations of the methyl group at C8. The first hydroxylation forms heme I, the second hydroxylation results in an unstable dihydroxymethyl group, which spontaneously dehydrates, resulting in the formyl group of heme A. This is Heme A synthase from Beijerinckia indica subsp. indica (strain ATCC 9039 / DSM 1715 / NCIMB 8712).